The chain runs to 738 residues: Protein ALEX (738 aa).

Disordered regions lie at residues 1–105 (MSPS…EEAM), 155–188 (REDYSPPPEESVPFQLDGEEFGGDSPPPDSASHA), 237–350 (TTFP…LPKP), 387–516 (MSGQ…LGQP), 528–578 (GEPG…LDPP), and 611–689 (GMRL…RPRI). Residues 257–273 (GSTTTPLSIWTAPQSQV) show a composition bias toward polar residues. The segment covering 279–301 (KSREPQLRASTQRDPHLSDKQPR) has biased composition (basic and acidic residues). Residues 387-396 (MSGQNQTEGQ) are compositionally biased toward polar residues. 3 stretches are compositionally biased toward pro residues: residues 410-438 (QPPPPPPSQPPSQPLSQPPSQPPSQPPSQ), 448-467 (PSLPPGQSPTPKRSPQPRQP), and 476-485 (PGQPPSPLRS). Low complexity-rich tracts occupy residues 542–564 (PSLPAQQLPPEQPLLPAQSLPAG), 615–626 (RPASARSSPPAM), and 656–671 (ATRSATSSPEPSEAAS).

Belongs to the ALEX family. As to quaternary structure, interacts with the N-terminal region of the XLas isoforms of guanine nucleotide-binding protein G(s) subunit alpha.

Its subcellular location is the cell membrane. The protein localises to the cell projection. The protein resides in the ruffle. May inhibit the adenylyl cyclase-stimulating activity of guanine nucleotide-binding protein G(s) subunit alpha which is produced from the same locus in a different open reading frame. The polypeptide is Protein ALEX (Rattus norvegicus (Rat)).